A 319-amino-acid chain; its full sequence is Phosphatidylglycerol--prolipoprotein diacylglyceryl transferase (319 aa).

The next 3 helical transmembrane spans lie at 21-41 (PIPIRAYAMCIIAGIIVAIWL), 50-70 (GGNPEIVLDAAIVAVPAGIIG), and 98-118 (NGGLGIWGAVILGGLAVAVFF). An a 1,2-diacyl-sn-glycero-3-phospho-(1'-sn-glycerol)-binding site is contributed by Arg144. The next 2 membrane-spanning stretches (helical) occupy residues 191 to 211 (VHPTFLYELLWNLLIFALLMW) and 254 to 274 (INTIVSAVVFAGAIIVFFLLK). Residues 295-319 (AVASPDGKPLPKAGEGIDGETPSTR) are disordered.

It belongs to the Lgt family.

Its subcellular location is the cell membrane. It carries out the reaction L-cysteinyl-[prolipoprotein] + a 1,2-diacyl-sn-glycero-3-phospho-(1'-sn-glycerol) = an S-1,2-diacyl-sn-glyceryl-L-cysteinyl-[prolipoprotein] + sn-glycerol 1-phosphate + H(+). Its pathway is protein modification; lipoprotein biosynthesis (diacylglyceryl transfer). Catalyzes the transfer of the diacylglyceryl group from phosphatidylglycerol to the sulfhydryl group of the N-terminal cysteine of a prolipoprotein, the first step in the formation of mature lipoproteins. This Corynebacterium glutamicum (strain R) protein is Phosphatidylglycerol--prolipoprotein diacylglyceryl transferase.